The chain runs to 170 residues: Small ribosomal subunit protein eS7 (170 aa).

The protein belongs to the eukaryotic ribosomal protein eS7 family. As to quaternary structure, component of the small ribosomal subunit.

Its subcellular location is the cytoplasm. This Encephalitozoon cuniculi (strain GB-M1) (Microsporidian parasite) protein is Small ribosomal subunit protein eS7 (RPS7).